The sequence spans 93 residues: Integration host factor subunit beta (93 aa).

The protein belongs to the bacterial histone-like protein family. As to quaternary structure, heterodimer of an alpha and a beta chain.

In terms of biological role, this protein is one of the two subunits of integration host factor, a specific DNA-binding protein that functions in genetic recombination as well as in transcriptional and translational control. In Haemophilus ducreyi (strain 35000HP / ATCC 700724), this protein is Integration host factor subunit beta.